Reading from the N-terminus, the 364-residue chain is Ribosomal RNA small subunit methyltransferase H (364 aa).

S-adenosyl-L-methionine-binding positions include 55–57 (GGH), aspartate 75, phenylalanine 101, aspartate 122, and glutamine 129. The segment at 333-364 (LPPGGGAGFVKAGRVPGEPVRGTRAGSKGRRR) is disordered.

This sequence belongs to the methyltransferase superfamily. RsmH family.

Its subcellular location is the cytoplasm. The enzyme catalyses cytidine(1402) in 16S rRNA + S-adenosyl-L-methionine = N(4)-methylcytidine(1402) in 16S rRNA + S-adenosyl-L-homocysteine + H(+). Specifically methylates the N4 position of cytidine in position 1402 (C1402) of 16S rRNA. The polypeptide is Ribosomal RNA small subunit methyltransferase H (Bordetella bronchiseptica (strain ATCC BAA-588 / NCTC 13252 / RB50) (Alcaligenes bronchisepticus)).